The sequence spans 433 residues: Serine--tRNA ligase (433 aa).

239-241 (TAE) serves as a coordination point for L-serine. An ATP-binding site is contributed by 270 to 272 (RSE). Glutamate 293 serves as a coordination point for L-serine. Residue 357–360 (EISS) participates in ATP binding. Position 393 (serine 393) interacts with L-serine.

This sequence belongs to the class-II aminoacyl-tRNA synthetase family. Type-1 seryl-tRNA synthetase subfamily. In terms of assembly, homodimer. The tRNA molecule binds across the dimer.

It is found in the cytoplasm. It catalyses the reaction tRNA(Ser) + L-serine + ATP = L-seryl-tRNA(Ser) + AMP + diphosphate + H(+). It carries out the reaction tRNA(Sec) + L-serine + ATP = L-seryl-tRNA(Sec) + AMP + diphosphate + H(+). It participates in aminoacyl-tRNA biosynthesis; selenocysteinyl-tRNA(Sec) biosynthesis; L-seryl-tRNA(Sec) from L-serine and tRNA(Sec): step 1/1. Catalyzes the attachment of serine to tRNA(Ser). Is also able to aminoacylate tRNA(Sec) with serine, to form the misacylated tRNA L-seryl-tRNA(Sec), which will be further converted into selenocysteinyl-tRNA(Sec). This chain is Serine--tRNA ligase, found in Sorangium cellulosum (strain So ce56) (Polyangium cellulosum (strain So ce56)).